The sequence spans 594 residues: SHC-transforming protein 3 (594 aa).

The disordered stretch occupies residues 98 to 147; it reads GSCSAPSLAAPDGSAPSAPRAPAMSAARKGRPGDEPLPRPPRGAPHASDQ. Low complexity predominate over residues 101-124; that stretch reads SAPSLAAPDGSAPSAPRAPAMSAA. The 186-residue stretch at 149–334 folds into the PID domain; that stretch reads LGPGVTYVVK…LDEPWTEEEG (186 aa). The CH1 stretch occupies residues 335–498; that stretch reads DGSDHPYYNS…KMLEELQAET (164 aa). Disordered stretches follow at residues 351–373 and 386–405; these read PPGG…AQFA and GDTF…SSDI. Residues 393-405 are compositionally biased toward polar residues; it reads WQQTPLRQGSSDI. Phosphoserine is present on Ser402. In terms of domain architecture, SH2 spans 499 to 590; the sequence is WYQGEMSRKE…GSELCLQQPV (92 aa).

Interacts with the Trk receptors in a phosphotyrosine-dependent manner. Once activated, binds to GRB2. Interacts with activated EGF receptors. Tyrosine phosphorylated. In terms of tissue distribution, mainly expressed in brain. Hardly detectable in other tissues, except in pancreas. Highly expressed in the cerebral cortex, frontal and temporal lobes, occipital pole, hippocampus, caudate nucleus and amygdala. Expressed at low level in the cerebellum, medulla and spinal cord.

Functionally, signaling adapter that couples activated growth factor receptors to signaling pathway in neurons. Involved in the signal transduction pathways of neurotrophin-activated Trk receptors in cortical neurons. The sequence is that of SHC-transforming protein 3 (SHC3) from Homo sapiens (Human).